Consider the following 1062-residue polypeptide: MGKREDIKKILVIGSGPIVIGQAAEFDYAGTQACQALKEEGYEVILVNSNPATIMTDTTMADRVYIEPLTLEFVSRIIRMERPDGILPTLGGQTGLNMAVELDQAGILKEYNVELLGTKLDSIQQAEDRDLFRALMKELNEPVPDSEIIHTLEEAYTFVERVGYPIIVRPAYTLGGTGGGLVYNEEDLVEIVTSGLKYSPVTQCLVEKSIAGFKEIEYEVMRDGKDHAIVVCNMENIDPVGVHTGDSIVVAPSQTLSDREYQMLRNSSLKIIRALGIEGGCNVQFALDPDSFQYYIIEVNPRVSRSSALASKATGYPIAKIAAKIAVGYTLDELLNPITQTTYASFEPALDYVVSKIPRWPFDKFEAANRSLGTQMKATGEVMAIGRNLEESLLKAVRSLEAGVYHLDQPDVNDLDKESLEKKLTKPDDERLFALGEAIRRGYTIEELWALTKIDRFFLRSFARIIQLETQLKENVGDLELLKEAKERGFSDMIIADLWGTSEQEVYELRMNHGLSPVYKMVDTCAAEFASATPYFYGTYEEENESERTDKKSILVLGSGPIRIGQGIEFDYATVHTVWAIKEAGYEAIIVNNNPETVSTDFSTSDKLYFEPLTVEDVMHIVNLEQPEGVIVQFGGQTAINLASELAARGVKIIGTALEDMDRAEDRDKFEQTLVELNIPQPLGDTATSIEEARQIAERIGYPVLVRPSYVLGGRAMEIVYKEEELLNYMAHAVKVNPKHPVLIDRYLTGKELEVDAISDGENVYIPGIMEHIERAGVHSGDSIAVYPPQTVPESLKQKLIERTIELARGLRIVGLLNIQFVWHKDDVYVLEVNPRSSRTVPFLSKVTGVPMANVATKVMLGKTLPQLGYETGYHPEAKEVSVKVPVFSFAKLRRVDITLGPEMKSTGEVMGRDKTLEKALYKGLIASGMSIPTHGSVLFTIADKDKQEAISLAKRFYQIGFSILATEGTAHILHEEGIPVTTVNKISDEKPHLLDVIRAGDAQFVINTLTRGKQPARDGFRIRRESVENGVVCLTSLDTAEALLRVLESITFSAESMPVMQ.

Residues 1–401 are carboxyphosphate synthetic domain; that stretch reads MGKREDIKKI…SLLKAVRSLE (401 aa). The ATP site is built by Arg129, Arg169, Gly175, Gly176, Lys208, Ile210, Glu215, Gly241, Val242, His243, Gln284, and Glu298. The region spanning 133-327 is the ATP-grasp 1 domain; the sequence is RALMKELNEP…IAKIAAKIAV (195 aa). The Mg(2+) site is built by Gln284, Glu298, and Asn300. Mn(2+)-binding residues include Gln284, Glu298, and Asn300. The interval 402–546 is oligomerization domain; the sequence is AGVYHLDQPD…YGTYEEENES (145 aa). A carbamoyl phosphate synthetic domain region spans residues 547-929; the sequence is ERTDKKSILV…ALYKGLIASG (383 aa). The ATP-grasp 2 domain occupies 671-861; that stretch reads EQTLVELNIP…MANVATKVML (191 aa). Arg707, Arg746, Leu748, Glu752, Gly777, Val778, His779, Ser780, Gln820, and Glu832 together coordinate ATP. Residues Gln820, Glu832, and Asn834 each coordinate Mg(2+). 3 residues coordinate Mn(2+): Gln820, Glu832, and Asn834. Positions 930-1062 constitute an MGS-like domain; it reads MSIPTHGSVL…FSAESMPVMQ (133 aa). The segment at 930-1062 is allosteric domain; it reads MSIPTHGSVL…FSAESMPVMQ (133 aa).

This sequence belongs to the CarB family. As to quaternary structure, composed of two chains; the small (or glutamine) chain promotes the hydrolysis of glutamine to ammonia, which is used by the large (or ammonia) chain to synthesize carbamoyl phosphate. Tetramer of heterodimers (alpha,beta)4. Mg(2+) serves as cofactor. Requires Mn(2+) as cofactor.

It catalyses the reaction hydrogencarbonate + L-glutamine + 2 ATP + H2O = carbamoyl phosphate + L-glutamate + 2 ADP + phosphate + 2 H(+). The catalysed reaction is hydrogencarbonate + NH4(+) + 2 ATP = carbamoyl phosphate + 2 ADP + phosphate + 2 H(+). Its pathway is amino-acid biosynthesis; L-arginine biosynthesis; carbamoyl phosphate from bicarbonate: step 1/1. It participates in pyrimidine metabolism; UMP biosynthesis via de novo pathway; (S)-dihydroorotate from bicarbonate: step 1/3. Functionally, small subunit of the glutamine-dependent carbamoyl phosphate synthetase (CPSase). CPSase catalyzes the formation of carbamoyl phosphate from the ammonia moiety of glutamine, carbonate, and phosphate donated by ATP, constituting the first step of the biosynthetic pathway leading to pyrimidine nucleotides. The large subunit (synthetase) binds the substrates ammonia (free or transferred from glutamine from the small subunit), hydrogencarbonate and ATP and carries out an ATP-coupled ligase reaction, activating hydrogencarbonate by forming carboxy phosphate which reacts with ammonia to form carbamoyl phosphate. The chain is Carbamoyl phosphate synthase pyrimidine-specific large chain (pyrAB) from Halalkalibacterium halodurans (strain ATCC BAA-125 / DSM 18197 / FERM 7344 / JCM 9153 / C-125) (Bacillus halodurans).